A 422-amino-acid polypeptide reads, in one-letter code: Probable D-serine dehydratase (422 aa).

K105 carries the N6-(pyridoxal phosphate)lysine modification.

The protein belongs to the serine/threonine dehydratase family. DsdA subfamily. Pyridoxal 5'-phosphate is required as a cofactor.

It carries out the reaction D-serine = pyruvate + NH4(+). In Carboxydothermus hydrogenoformans (strain ATCC BAA-161 / DSM 6008 / Z-2901), this protein is Probable D-serine dehydratase.